We begin with the raw amino-acid sequence, 481 residues long: Cysteine--tRNA ligase (481 aa).

Residue cysteine 43 coordinates Zn(2+). Positions 45 to 55 match the 'HIGH' region motif; it reads ATVQGLPHIGH. Residues cysteine 221, histidine 246, and glutamate 250 each contribute to the Zn(2+) site. The 'KMSKS' region motif lies at 277-281; that stretch reads KMSKS. An ATP-binding site is contributed by lysine 280.

This sequence belongs to the class-I aminoacyl-tRNA synthetase family. In terms of assembly, monomer. It depends on Zn(2+) as a cofactor.

The protein localises to the cytoplasm. It catalyses the reaction tRNA(Cys) + L-cysteine + ATP = L-cysteinyl-tRNA(Cys) + AMP + diphosphate. This is Cysteine--tRNA ligase from Mycobacterium sp. (strain KMS).